The chain runs to 289 residues: Elongation factor Ts (289 aa).

Residues 82–85 (TDFL) are involved in Mg(2+) ion dislocation from EF-Tu.

It belongs to the EF-Ts family.

The protein localises to the cytoplasm. Its function is as follows. Associates with the EF-Tu.GDP complex and induces the exchange of GDP to GTP. It remains bound to the aminoacyl-tRNA.EF-Tu.GTP complex up to the GTP hydrolysis stage on the ribosome. This chain is Elongation factor Ts, found in Azotobacter vinelandii (strain DJ / ATCC BAA-1303).